We begin with the raw amino-acid sequence, 395 residues long: MSLEREEPQHFGAGPAQMPTPVLQQAAKDLINFNDIGLGIGEISHRSKDATKVIEDSKKHLIELLNIPDTHEVFYLQGGGTTGFSSVATNLAAAYVGKHGKIAPAGYLVTGSWSQKSFEEAKRLHVPAEVIFNAKDYNNGKFGKIPDESLWEDKIKGKAFSYVYLCENETVHGVEWPELPKCLVNDPNIEIVADLSSDILSRKIDVSQYGVIMAGAQKNIGLAGLTLYIIKKSILKNISGASDETLHELGVPITPIAFDYPTVVKNNSAYNTIPIFTLHVMDLVFQHILKKGGVEAQQAENEEKAKILYEALDANSDFYNVPVDPKCRSKMNVVFTLKKDGLDDQFLKEAAARHLTGLKGHRSVGGFRASIYNALSVKAVQNLVDFIKEFAEKNA.

At Thr-20 the chain carries Phosphothreonine. A pyridoxal 5'-phosphate-binding site is contributed by 80–81 (GT). Residue Ser-112 is modified to Phosphoserine. The pyridoxal 5'-phosphate site is built by Trp-113, Thr-170, Asp-194, and Gln-217. At Lys-218 the chain carries N6-(pyridoxal phosphate)lysine. A pyridoxal 5'-phosphate-binding site is contributed by 271–272 (NT).

It belongs to the class-V pyridoxal-phosphate-dependent aminotransferase family. SerC subfamily. Homodimer. Pyridoxal 5'-phosphate serves as cofactor.

The enzyme catalyses O-phospho-L-serine + 2-oxoglutarate = 3-phosphooxypyruvate + L-glutamate. It carries out the reaction 4-(phosphooxy)-L-threonine + 2-oxoglutarate = (R)-3-hydroxy-2-oxo-4-phosphooxybutanoate + L-glutamate. It functions in the pathway amino-acid biosynthesis; L-serine biosynthesis; L-serine from 3-phospho-D-glycerate: step 2/3. Functionally, phosphoserine aminotransferase (PSAT) is a pyridoxal 5'-phosphate-dependent enzyme involved in the second step of the phosphorylated pathway of serine biosynthesis. Catalyzes the reversible conversion of 3-phosphohydroxypyruvate to phosphoserine and of 3-hydroxy-2-oxo-4-phosphonooxybutanoate to phosphohydroxythreonine. Plays an indirect role in purine biosynthesis. This Saccharomyces cerevisiae (strain ATCC 204508 / S288c) (Baker's yeast) protein is Phosphoserine aminotransferase.